The sequence spans 673 residues: Methionine--tRNA ligase (673 aa).

Positions proline 13 to histidine 23 match the 'HIGH' region motif. Zn(2+) contacts are provided by cysteine 144, cysteine 147, cysteine 157, and cysteine 160. The short motif at lysine 330–serine 334 is the 'KMSKS' region element. Lysine 333 contributes to the ATP binding site. The 102-residue stretch at aspartate 572 to serine 673 folds into the tRNA-binding domain.

It belongs to the class-I aminoacyl-tRNA synthetase family. MetG type 1 subfamily. As to quaternary structure, homodimer. It depends on Zn(2+) as a cofactor.

The protein resides in the cytoplasm. It catalyses the reaction tRNA(Met) + L-methionine + ATP = L-methionyl-tRNA(Met) + AMP + diphosphate. Is required not only for elongation of protein synthesis but also for the initiation of all mRNA translation through initiator tRNA(fMet) aminoacylation. The protein is Methionine--tRNA ligase of Dichelobacter nodosus (strain VCS1703A).